A 96-amino-acid chain; its full sequence is Small ribosomal subunit protein bS20 (96 aa).

It belongs to the bacterial ribosomal protein bS20 family.

Binds directly to 16S ribosomal RNA. The chain is Small ribosomal subunit protein bS20 from Anaplasma phagocytophilum (strain HZ).